Here is a 197-residue protein sequence, read N- to C-terminus: Putative WUSCHEL-related homeobox 10 (197 aa).

Positions 75 to 139 (STRPRWTPTT…NRRARSKRKQ (65 aa)) form a DNA-binding region, homeobox; WUS-type. A disordered region spans residues 132–168 (RARSKRKQPPTTTITSSQADDAAVTTTEERGRCGDDS). The span at 140 to 150 (PPTTTITSSQA) shows a compositional bias: polar residues.

This sequence belongs to the WUS homeobox family.

The protein resides in the nucleus. Functionally, potential transcription factor that plays a central role during developmental processes. This Arabidopsis thaliana (Mouse-ear cress) protein is Putative WUSCHEL-related homeobox 10 (WOX10).